A 45-amino-acid chain; its full sequence is MTKRTFGGTSRKRKRVSGFRVRMRTHTGRRVIRSRRKRGRTRLAV.

The segment at 1-24 is disordered; sequence MTKRTFGGTSRKRKRVSGFRVRMR. Positions 10 to 24 are enriched in basic residues; that stretch reads SRKRKRVSGFRVRMR.

It belongs to the bacterial ribosomal protein bL34 family.

This is Large ribosomal subunit protein bL34 from Prochlorococcus marinus (strain MIT 9303).